Here is a 453-residue protein sequence, read N- to C-terminus: UDP-N-acetylmuramoylalanine--D-glutamate ligase (453 aa).

Gly117–Thr123 is an ATP binding site.

This sequence belongs to the MurCDEF family.

It is found in the cytoplasm. The catalysed reaction is UDP-N-acetyl-alpha-D-muramoyl-L-alanine + D-glutamate + ATP = UDP-N-acetyl-alpha-D-muramoyl-L-alanyl-D-glutamate + ADP + phosphate + H(+). Its pathway is cell wall biogenesis; peptidoglycan biosynthesis. In terms of biological role, cell wall formation. Catalyzes the addition of glutamate to the nucleotide precursor UDP-N-acetylmuramoyl-L-alanine (UMA). The protein is UDP-N-acetylmuramoylalanine--D-glutamate ligase of Caldicellulosiruptor saccharolyticus (strain ATCC 43494 / DSM 8903 / Tp8T 6331).